A 375-amino-acid polypeptide reads, in one-letter code: Dehydrodolichyl diphosphate synthase complex subunit NUS1 (375 aa).

A compositionally biased stretch (basic and acidic residues) spans 1–28 (MPTMIKKDDKAMEPPNEKPHRKIERDDV). A disordered region spans residues 1-48 (MPTMIKKDDKAMEPPNEKPHRKIERDDVPESSNHIPPPESGVLKGGKV). The helical transmembrane segment at 97–119 (YLFYKFLLVLLYICFGLFRYGQY) threads the bilayer.

The protein belongs to the UPP synthase family. As to quaternary structure, forms an active dehydrodolichyl diphosphate synthase complex with either SRT1 or RER2. Mg(2+) serves as cofactor.

It is found in the endoplasmic reticulum membrane. Its subcellular location is the lipid droplet. The protein localises to the nucleus membrane. The enzyme catalyses n isopentenyl diphosphate + (2E,6E)-farnesyl diphosphate = a di-trans,poly-cis-polyprenyl diphosphate + n diphosphate. Its pathway is protein modification; protein glycosylation. Its function is as follows. With SRT1 or RER2, forms the dehydrodolichyl diphosphate synthase (DDS) complex, an essential component of the dolichol monophosphate (Dol-P) biosynthetic machinery. Adds multiple copies of isopentenyl pyrophosphate (IPP) to farnesyl pyrophosphate (FPP) to produce dehydrodolichyl diphosphate (Dedol-PP), a precursor of dolichol which is utilized as a sugar carrier in protein glycosylation in the endoplasmic reticulum (ER). The polypeptide is Dehydrodolichyl diphosphate synthase complex subunit NUS1 (NUS1) (Saccharomyces cerevisiae (strain ATCC 204508 / S288c) (Baker's yeast)).